Here is a 637-residue protein sequence, read N- to C-terminus: DNA gyrase subunit B (637 aa).

A Toprim domain is found at 422–536 (CEVYIVEGDS…AGYVYLAMPP (115 aa)). Mg(2+)-binding residues include Glu428, Asp501, and Asp503.

The protein belongs to the type II topoisomerase GyrB family. As to quaternary structure, heterotetramer, composed of two GyrA and two GyrB chains. In the heterotetramer, GyrA contains the active site tyrosine that forms a transient covalent intermediate with DNA, while GyrB binds cofactors and catalyzes ATP hydrolysis. Mg(2+) is required as a cofactor. The cofactor is Mn(2+). Requires Ca(2+) as cofactor.

It localises to the cytoplasm. The enzyme catalyses ATP-dependent breakage, passage and rejoining of double-stranded DNA.. Its function is as follows. A type II topoisomerase that negatively supercoils closed circular double-stranded (ds) DNA in an ATP-dependent manner to modulate DNA topology and maintain chromosomes in an underwound state. Negative supercoiling favors strand separation, and DNA replication, transcription, recombination and repair, all of which involve strand separation. Also able to catalyze the interconversion of other topological isomers of dsDNA rings, including catenanes and knotted rings. Type II topoisomerases break and join 2 DNA strands simultaneously in an ATP-dependent manner. This Treponema pallidum (strain Nichols) protein is DNA gyrase subunit B.